Here is a 197-residue protein sequence, read N- to C-terminus: MDNVEKELFSQGYEKIVGIDEAGRGPLAGPLVIASVIFPKHQKPFIHTDSKGLSEKEREYLFEKIHDYAEEINITIVENTEIDKFGISNAAKIYMENNLKSLKSKWDIALVDFVKLDESINHLPLIKGDEISHTIAAASIIAKVVRDRIMIEYKEKYPNFSFDKHKGYATKQHYQEIKKFGITPIHRRSFNLGVNDD.

The RNase H type-2 domain occupies 14–197 (EKIVGIDEAG…RSFNLGVNDD (184 aa)). 3 residues coordinate a divalent metal cation: Asp-20, Glu-21, and Asp-112.

This sequence belongs to the RNase HII family. Mn(2+) serves as cofactor. It depends on Mg(2+) as a cofactor.

The protein localises to the cytoplasm. The catalysed reaction is Endonucleolytic cleavage to 5'-phosphomonoester.. Its function is as follows. Endonuclease that specifically degrades the RNA of RNA-DNA hybrids. The polypeptide is Ribonuclease HII (Sulfurihydrogenibium sp. (strain YO3AOP1)).